Reading from the N-terminus, the 430-residue chain is NADH-quinone oxidoreductase subunit D 1 (430 aa).

The interval 1-36 (MSEAKGVGGIDPRATPGSAGAGERPPMGTVSRAGDG) is disordered.

It belongs to the complex I 49 kDa subunit family. NDH-1 is composed of 14 different subunits. Subunits NuoB, C, D, E, F, and G constitute the peripheral sector of the complex.

The protein localises to the cell inner membrane. The catalysed reaction is a quinone + NADH + 5 H(+)(in) = a quinol + NAD(+) + 4 H(+)(out). Functionally, NDH-1 shuttles electrons from NADH, via FMN and iron-sulfur (Fe-S) centers, to quinones in the respiratory chain. The immediate electron acceptor for the enzyme in this species is believed to be ubiquinone. Couples the redox reaction to proton translocation (for every two electrons transferred, four hydrogen ions are translocated across the cytoplasmic membrane), and thus conserves the redox energy in a proton gradient. In Anaeromyxobacter dehalogenans (strain 2CP-C), this protein is NADH-quinone oxidoreductase subunit D 1.